A 281-amino-acid chain; its full sequence is 4-deoxy-L-threo-5-hexosulose-uronate ketol-isomerase (281 aa).

Zn(2+) contacts are provided by histidine 198, histidine 200, glutamate 205, and histidine 248.

The protein belongs to the KduI family. Zn(2+) serves as cofactor.

It carries out the reaction 5-dehydro-4-deoxy-D-glucuronate = 3-deoxy-D-glycero-2,5-hexodiulosonate. It participates in glycan metabolism; pectin degradation; 2-dehydro-3-deoxy-D-gluconate from pectin: step 4/5. Catalyzes the isomerization of 5-dehydro-4-deoxy-D-glucuronate to 3-deoxy-D-glycero-2,5-hexodiulosonate. The polypeptide is 4-deoxy-L-threo-5-hexosulose-uronate ketol-isomerase (Lacticaseibacillus casei (strain BL23) (Lactobacillus casei)).